Here is a 299-residue protein sequence, read N- to C-terminus: tRNA dimethylallyltransferase (299 aa).

13–20 (GPTASGKT) is a binding site for ATP. Residue 15-20 (TASGKT) coordinates substrate. Residues 38 to 41 (DSRQ) are interaction with substrate tRNA.

This sequence belongs to the IPP transferase family. In terms of assembly, monomer. Mg(2+) is required as a cofactor.

It catalyses the reaction adenosine(37) in tRNA + dimethylallyl diphosphate = N(6)-dimethylallyladenosine(37) in tRNA + diphosphate. Functionally, catalyzes the transfer of a dimethylallyl group onto the adenine at position 37 in tRNAs that read codons beginning with uridine, leading to the formation of N6-(dimethylallyl)adenosine (i(6)A). This is tRNA dimethylallyltransferase from Prochlorococcus marinus (strain AS9601).